We begin with the raw amino-acid sequence, 427 residues long: UPF0597 protein CD630_32320 (427 aa).

This sequence belongs to the UPF0597 family.

This Clostridioides difficile (strain 630) (Peptoclostridium difficile) protein is UPF0597 protein CD630_32320.